A 118-amino-acid polypeptide reads, in one-letter code: Large ribosomal subunit protein bL20 (118 aa).

This sequence belongs to the bacterial ribosomal protein bL20 family.

Binds directly to 23S ribosomal RNA and is necessary for the in vitro assembly process of the 50S ribosomal subunit. It is not involved in the protein synthesizing functions of that subunit. This is Large ribosomal subunit protein bL20 (rplT) from Thermotoga maritima (strain ATCC 43589 / DSM 3109 / JCM 10099 / NBRC 100826 / MSB8).